Reading from the N-terminus, the 209-residue chain is MGKVHVFDHPLIQHKLSYIRDVHTGTKEFRELVDEVGMLMAYEVTRDLELQDVEIETPVTKMIAKRLTGKKLAFVPILRAGLGMTQGILTLVPAARIGHVGLYRDPETLEAVEYFVKLPQDIEEREIVVVDPMLATGASAIEAINSLKKRGAKNIRFMCLIAAPEGVEKLQAAHEDVDIFIAALDEKLDNHAYITPGLGDAGDRLFGTK.

Residues arginine 79, arginine 104, and 131-139 each bind 5-phospho-alpha-D-ribose 1-diphosphate; that span reads DPMLATGAS. Residues isoleucine 194 and 199–201 contribute to the uracil site; that span reads GDA. A 5-phospho-alpha-D-ribose 1-diphosphate-binding site is contributed by aspartate 200.

This sequence belongs to the UPRTase family. Mg(2+) serves as cofactor.

It carries out the reaction UMP + diphosphate = 5-phospho-alpha-D-ribose 1-diphosphate + uracil. Its pathway is pyrimidine metabolism; UMP biosynthesis via salvage pathway; UMP from uracil: step 1/1. With respect to regulation, allosterically activated by GTP. In terms of biological role, catalyzes the conversion of uracil and 5-phospho-alpha-D-ribose 1-diphosphate (PRPP) to UMP and diphosphate. In Staphylococcus saprophyticus subsp. saprophyticus (strain ATCC 15305 / DSM 20229 / NCIMB 8711 / NCTC 7292 / S-41), this protein is Uracil phosphoribosyltransferase.